The sequence spans 477 residues: MRALPLNIGTIHFVGIGGIGMSGIAEVLHMLGYKVQGSDIAEGANVQRLRQAGIVVHIGHDAANLGDAQVVVTSTAVKKDNPEVVAARAKLIPVVRRAEMLAELMRLRWSVAIGGTHGKTTTTSLVACVLEHARLDPTVINGGIIEAYGTNTRMGSGDWMVVEADESDGSFLRLPAVIAVVTNMDPEHLDHWGTEEAMQAGYDQFVSNIPFYGFAVLCVDHPQVQQMIPRLSDHRVITYGFSPQADIRAEKVVMDKRGATFEVVVTNRQRNRSRRAGPFRLPMLGHHNVLNSLAAIAVALEMEISDSVIASALTTFKGVKRRFTRTGEYNGISIVDDYGHHPVEIAAVLKAARQAGARNVIAVMQPHRYSRLKVLFNEFCTCMNDADTVIVADVYAAGETPIEGAGRDALVEGLRDRGHRSVVPLPDPAHLAEMINAIAKPGDYVVCLGAGTITQWAQALPAQLEALNRQPATEGAA.

115–121 (GTHGKTT) is an ATP binding site.

Belongs to the MurCDEF family.

The protein localises to the cytoplasm. The catalysed reaction is UDP-N-acetyl-alpha-D-muramate + L-alanine + ATP = UDP-N-acetyl-alpha-D-muramoyl-L-alanine + ADP + phosphate + H(+). The protein operates within cell wall biogenesis; peptidoglycan biosynthesis. In terms of biological role, cell wall formation. The protein is UDP-N-acetylmuramate--L-alanine ligase of Gluconobacter oxydans (strain 621H) (Gluconobacter suboxydans).